The primary structure comprises 221 residues: Probable septum site-determining protein MinC (221 aa).

Belongs to the MinC family. In terms of assembly, interacts with MinD and FtsZ.

Functionally, cell division inhibitor that blocks the formation of polar Z ring septums. Rapidly oscillates between the poles of the cell to destabilize FtsZ filaments that have formed before they mature into polar Z rings. Prevents FtsZ polymerization. The protein is Probable septum site-determining protein MinC of Aliivibrio fischeri (strain ATCC 700601 / ES114) (Vibrio fischeri).